The sequence spans 572 residues: Methionine--tRNA ligase (572 aa).

The short motif at 11-21 (PYINGIKHLGN) is the 'HIGH' region element. Zn(2+)-binding residues include Cys-143, Cys-146, Cys-156, and Cys-159. The short motif at 346–350 (QFSTS) is the 'KMSKS' region element. Thr-349 provides a ligand contact to ATP.

It belongs to the class-I aminoacyl-tRNA synthetase family. MetG type 1 subfamily. In terms of assembly, monomer. Zn(2+) serves as cofactor.

It localises to the cytoplasm. The enzyme catalyses tRNA(Met) + L-methionine + ATP = L-methionyl-tRNA(Met) + AMP + diphosphate. Functionally, is required not only for elongation of protein synthesis but also for the initiation of all mRNA translation through initiator tRNA(fMet) aminoacylation. The sequence is that of Methionine--tRNA ligase from Cereibacter sphaeroides (strain KD131 / KCTC 12085) (Rhodobacter sphaeroides).